A 375-amino-acid chain; its full sequence is Chaperone protein DnaJ (375 aa).

The region spanning 5–70 (DFYETLGVAK…QKRAAYDRYG (66 aa)) is the J domain. A CR-type zinc finger spans residues 136 to 214 (GKTAQIRVPT…CHGQGRVTEE (79 aa)). Residues C149, C152, C166, C169, C188, C191, C202, and C205 each contribute to the Zn(2+) site. CXXCXGXG motif repeat units follow at residues 149-156 (CDVCSGSG), 166-173 (CGTCQGTG), 188-195 (CPTCHGRG), and 202-209 (CPKCHGQG).

Belongs to the DnaJ family. As to quaternary structure, homodimer. Zn(2+) is required as a cofactor.

Its subcellular location is the cytoplasm. Its function is as follows. Participates actively in the response to hyperosmotic and heat shock by preventing the aggregation of stress-denatured proteins and by disaggregating proteins, also in an autonomous, DnaK-independent fashion. Unfolded proteins bind initially to DnaJ; upon interaction with the DnaJ-bound protein, DnaK hydrolyzes its bound ATP, resulting in the formation of a stable complex. GrpE releases ADP from DnaK; ATP binding to DnaK triggers the release of the substrate protein, thus completing the reaction cycle. Several rounds of ATP-dependent interactions between DnaJ, DnaK and GrpE are required for fully efficient folding. Also involved, together with DnaK and GrpE, in the DNA replication of plasmids through activation of initiation proteins. This is Chaperone protein DnaJ from Rhizobium johnstonii (strain DSM 114642 / LMG 32736 / 3841) (Rhizobium leguminosarum bv. viciae).